Consider the following 307-residue polypeptide: Universal stress protein A family protein C25B2.10 (307 aa).

The segment at 1–63 is disordered; it reads MSESAPAGSK…RSSMEQPTFR (63 aa). Positions 21 to 30 are enriched in basic and acidic residues; it reads PEPRTSKDQQ. At S44 the chain carries Phosphoserine. T48 is modified (phosphothreonine). Phosphoserine is present on residues S98 and S102.

This sequence belongs to the universal stress protein A family.

It localises to the barrier septum. The protein localises to the cell tip. The protein is Universal stress protein A family protein C25B2.10 of Schizosaccharomyces pombe (strain 972 / ATCC 24843) (Fission yeast).